The following is a 395-amino-acid chain: Protein phosphatase PP2A regulatory subunit A (395 aa).

HEAT repeat units follow at residues 44–81 (DCLA…AVGP), 83–120 (STKT…ILSP), 122–159 (LAIQ…VLGK), 161–198 (ATIE…VIGI), 200–237 (LLSQ…QLGV), 239–276 (FFDD…EEFG), 279–316 (WAMQ…VLGS), and 318–355 (ITST…IVDE).

This sequence belongs to the phosphatase 2A regulatory subunit A family. In terms of assembly, PP2A exists in several trimeric forms, all of which consist of a core composed of a catalytic subunit associated with a 65 kDa regulatory subunit (PR65) (subunit A). The core complex associates with a third, variable subunit (subunit B), which confers distinct properties to the holoenzyme.

Functionally, the PR65 subunit of protein phosphatase 2A serves as a scaffolding molecule to coordinate the assembly of the catalytic subunit and a variable regulatory B subunit. This Pisum sativum (Garden pea) protein is Protein phosphatase PP2A regulatory subunit A.